Consider the following 261-residue polypeptide: Cytochrome c oxidase subunit 3 (261 aa).

Over 1 to 15 (MAHQAHSYHMVDPSP) the chain is Mitochondrial matrix. Residues 16–34 (WPIFGAAAALLTTSGLIMW) form a helical membrane-spanning segment. The Mitochondrial intermembrane segment spans residues 35 to 40 (FHYSST). The chain crosses the membrane as a helical span at residues 41–66 (TLLTMGLLSMLLVMLQWWRDVVREST). Residues 67-72 (FQGHHT) are Mitochondrial matrix-facing. Residues 73–105 (PTVQKGLRYGMILFITSEAFFFLGFFWAFFHSS) traverse the membrane as a helical segment. The Mitochondrial intermembrane segment spans residues 106-128 (LAPTPELGGQWPPTGVKPLNPLE). Residues 129–152 (VPLLNTAILLASGVTVTWAHHSIT) traverse the membrane as a helical segment. Residues 153–155 (EGN) are Mitochondrial matrix-facing. Residues 156 to 183 (RKQAIHALTLTILLGFYFTALQAMEYHE) traverse the membrane as a helical segment. Over 184 to 190 (ASFSIAD) the chain is Mitochondrial intermembrane. Residues 191 to 223 (SVYGSTFFVATGFHGLHVIIGSSFLTVCLLRLI) traverse the membrane as a helical segment. The Mitochondrial matrix portion of the chain corresponds to 224–232 (KFHFTPNHH). The chain crosses the membrane as a helical span at residues 233-256 (FGFEAAAWYWHFVDIIWLFLYMSM). The Mitochondrial intermembrane segment spans residues 257–261 (YWWGS).

It belongs to the cytochrome c oxidase subunit 3 family. In terms of assembly, component of the cytochrome c oxidase (complex IV, CIV), a multisubunit enzyme composed of 14 subunits. The complex is composed of a catalytic core of 3 subunits MT-CO1, MT-CO2 and MT-CO3, encoded in the mitochondrial DNA, and 11 supernumerary subunits COX4I, COX5A, COX5B, COX6A, COX6B, COX6C, COX7A, COX7B, COX7C, COX8 and NDUFA4, which are encoded in the nuclear genome. The complex exists as a monomer or a dimer and forms supercomplexes (SCs) in the inner mitochondrial membrane with NADH-ubiquinone oxidoreductase (complex I, CI) and ubiquinol-cytochrome c oxidoreductase (cytochrome b-c1 complex, complex III, CIII), resulting in different assemblies (supercomplex SCI(1)III(2)IV(1) and megacomplex MCI(2)III(2)IV(2)).

It is found in the mitochondrion inner membrane. It carries out the reaction 4 Fe(II)-[cytochrome c] + O2 + 8 H(+)(in) = 4 Fe(III)-[cytochrome c] + 2 H2O + 4 H(+)(out). In terms of biological role, component of the cytochrome c oxidase, the last enzyme in the mitochondrial electron transport chain which drives oxidative phosphorylation. The respiratory chain contains 3 multisubunit complexes succinate dehydrogenase (complex II, CII), ubiquinol-cytochrome c oxidoreductase (cytochrome b-c1 complex, complex III, CIII) and cytochrome c oxidase (complex IV, CIV), that cooperate to transfer electrons derived from NADH and succinate to molecular oxygen, creating an electrochemical gradient over the inner membrane that drives transmembrane transport and the ATP synthase. Cytochrome c oxidase is the component of the respiratory chain that catalyzes the reduction of oxygen to water. Electrons originating from reduced cytochrome c in the intermembrane space (IMS) are transferred via the dinuclear copper A center (CU(A)) of subunit 2 and heme A of subunit 1 to the active site in subunit 1, a binuclear center (BNC) formed by heme A3 and copper B (CU(B)). The BNC reduces molecular oxygen to 2 water molecules using 4 electrons from cytochrome c in the IMS and 4 protons from the mitochondrial matrix. The sequence is that of Cytochrome c oxidase subunit 3 (MT-CO3) from Gallus gallus (Chicken).